The sequence spans 474 residues: Proline--tRNA ligase (474 aa).

It belongs to the class-II aminoacyl-tRNA synthetase family. ProS type 3 subfamily. Homodimer.

Its subcellular location is the cytoplasm. The catalysed reaction is tRNA(Pro) + L-proline + ATP = L-prolyl-tRNA(Pro) + AMP + diphosphate. In terms of biological role, catalyzes the attachment of proline to tRNA(Pro) in a two-step reaction: proline is first activated by ATP to form Pro-AMP and then transferred to the acceptor end of tRNA(Pro). The protein is Proline--tRNA ligase of Phytoplasma australiense.